Reading from the N-terminus, the 621-residue chain is Leucine aminopeptidase (621 aa).

A propeptide spanning residues 1–73 is cleaved from the precursor; the sequence is MPLLRSSQHI…ISNRKEFRKM (73 aa). Residues 129–152 form a disordered region; it reads SSSGGSGGNGGSAGSSGNGEGGAQ. Gly residues predominate over residues 132–150; it reads GGSGGNGGSAGSSGNGEGG. Residues lysine 390, aspartate 395, and lysine 402 each coordinate a peptide. Residues lysine 390 and aspartate 395 each coordinate Zn(2+). Positions 400 to 417 are L13 loop; sequence NLKAAPGSMIDLMKFDMS. Residue lysine 402 is part of the active site. Residues aspartate 410, methionine 412, aspartate 415, aspartate 475, and glutamate 477 each coordinate Zn(2+). A peptide contacts are provided by aspartate 415 and aspartate 475. Arginine 479 is an active-site residue.

It belongs to the peptidase M17 family. As to quaternary structure, homohexamer composed of dimer of trimers. Both the identity and concentration of metal ions available dictate the extent to which oligomerization occurs; Mn(2+) and Co(2+) induces oligomerization, whereas Mg(2+) has no effect, and Zn(2+) causes irreversible protein aggregation in vitro. Zn(2+) is required as a cofactor.

It is found in the cytoplasm. It carries out the reaction Release of an N-terminal amino acid, Xaa-|-Yaa-, in which Xaa is preferably Leu, but may be other amino acids including Pro although not Arg or Lys, and Yaa may be Pro. Amino acid amides and methyl esters are also readily hydrolyzed, but rates on arylamides are exceedingly low.. It catalyses the reaction L-cysteinylglycine + H2O = L-cysteine + glycine. Oligomerization is required for catalytic activity and is metal-dependent. The type of metal that binds the 2 metal binding sites influences catalytic activity and substrate specificity. In vitro, activated by Co(2+), Mn(2+), Ni(2+), Mg(2+) and Zn(2+) with decreasing strength. Occupancy of the site 2 is essential and sufficient for activating the enzyme but occupation of the 2 sites is necessary for full catalytic activity. Inhibited by Ca(2+). Inhibited by fungal metabolite bestatin. Its function is as follows. Aminopeptidase which preferentially cleaves leucine residues from the N-terminus of peptides. Also, has some activity towards tryptophan and methionine and has very low activity towards alanine, arginine, asparagine, phenylalanine and tyrosine. No activity towards histidine, serine, valine, isoleucine, glycine, aspartic acid and glutamic acid. In addition, cleaves the Cys-Gly dipeptide, probably as part of the glutathione regulation pathway; cleavage only occurs in the presence of Mn(2+). Plays a role in the final step of host hemoglobin catabolism, by cleaving hemoglobin-derived oligopeptides providing a source of amino acids for the parasite protein synthesis and for the maintenance of osmotic homeostasis. This chain is Leucine aminopeptidase, found in Plasmodium vivax (strain Salvador I).